A 270-amino-acid chain; its full sequence is MGNTSSERAALERQAGHKTPRRDSSGGAKDGDRPKILMDSPEDADIFHSEEIKAPEKEEFLAWQHDLEANDKAPAQARPTVFRWTGGGKEVYLSGSFNNWSKLPLTRSQNNFVAILDLPEGEHQYKFFVDGQWTHDPSEPIVTSQLGTVNNIIQVKKTDFEVFDALMVDSQKCSDVSELSSSPPGPYHQEPYMSKPEERFKAPPILPPHLLQVILNKDTGISCDPALLPEPNHVMLNHLYALSIKDGVMVLSATHRYKKKYVTTLLYKPI.

The interval 1–44 (MGNTSSERAALERQAGHKTPRRDSSGGAKDGDRPKILMDSPEDA) is disordered. Residue glycine 2 is the site of N-myristoyl glycine attachment. Position 4 is a phosphothreonine (threonine 4). Phosphoserine occurs at positions 5 and 6. The span at 9 to 36 (AALERQAGHKTPRRDSSGGAKDGDRPKI) shows a compositional bias: basic and acidic residues. The residue at position 19 (threonine 19) is a Phosphothreonine. Phosphoserine; by autocatalysis occurs at positions 24 and 25. Phosphoserine occurs at positions 40, 96, and 101. The tract at residues 68–163 (EANDKAPAQA…QVKKTDFEVF (96 aa)) is glycogen-binding domain. Phosphoserine; by autocatalysis is present on serine 108. At threonine 148 the chain carries Phosphothreonine. Phosphoserine is present on serine 182. Lysine 201 carries the post-translational modification N6-succinyllysine.

It belongs to the 5'-AMP-activated protein kinase beta subunit family. AMPK is a heterotrimer of an alpha catalytic subunit (PRKAA1 or PRKAA2), a beta (PRKAB1 or PRKAB2) and a gamma non-catalytic subunits (PRKAG1, PRKAG2 or PRKAG3). Interacts with FNIP1 and FNIP2. Post-translationally, phosphorylated when associated with the catalytic subunit (PRKAA1 or PRKAA2). Phosphorylated by ULK1; leading to negatively regulate AMPK activity and suggesting the existence of a regulatory feedback loop between ULK1 and AMPK.

In terms of biological role, non-catalytic subunit of AMP-activated protein kinase (AMPK), an energy sensor protein kinase that plays a key role in regulating cellular energy metabolism. In response to reduction of intracellular ATP levels, AMPK activates energy-producing pathways and inhibits energy-consuming processes: inhibits protein, carbohydrate and lipid biosynthesis, as well as cell growth and proliferation. AMPK acts via direct phosphorylation of metabolic enzymes, and by longer-term effects via phosphorylation of transcription regulators. Also acts as a regulator of cellular polarity by remodeling the actin cytoskeleton; probably by indirectly activating myosin. Beta non-catalytic subunit acts as a scaffold on which the AMPK complex assembles, via its C-terminus that bridges alpha (PRKAA1 or PRKAA2) and gamma subunits (PRKAG1, PRKAG2 or PRKAG3). The protein is 5'-AMP-activated protein kinase subunit beta-1 (Prkab1) of Mus musculus (Mouse).